Consider the following 402-residue polypeptide: Endo-polygalacturonase (402 aa).

A signal peptide spans 1–23 (MEYQSGKRVLSLSLGLIGLFSAS). Residue D249 is the Proton donor of the active site. H277 is a catalytic residue.

It belongs to the glycosyl hydrolase 28 family. As to quaternary structure, monomer.

Its subcellular location is the secreted. It carries out the reaction (1,4-alpha-D-galacturonosyl)n+m + H2O = (1,4-alpha-D-galacturonosyl)n + (1,4-alpha-D-galacturonosyl)m.. Involved in maceration and soft-rotting of plant tissue. This chain is Endo-polygalacturonase (peh), found in Pectobacterium carotovorum subsp. carotovorum (Erwinia carotovora subsp. carotovora).